The primary structure comprises 246 residues: Hydroxyacylglutathione hydrolase (246 aa).

Zn(2+)-binding residues include histidine 58, histidine 60, aspartate 62, histidine 63, histidine 117, aspartate 137, and histidine 175.

This sequence belongs to the metallo-beta-lactamase superfamily. Glyoxalase II family. In terms of assembly, monomer. Zn(2+) serves as cofactor.

It catalyses the reaction an S-(2-hydroxyacyl)glutathione + H2O = a 2-hydroxy carboxylate + glutathione + H(+). It participates in secondary metabolite metabolism; methylglyoxal degradation; (R)-lactate from methylglyoxal: step 2/2. Functionally, thiolesterase that catalyzes the hydrolysis of S-D-lactoyl-glutathione to form glutathione and D-lactic acid. The chain is Hydroxyacylglutathione hydrolase from Prochlorococcus marinus (strain MIT 9312).